Reading from the N-terminus, the 489-residue chain is Bridging integrator 2 (489 aa).

A BAR domain is found at 28 to 244; that stretch reads VLQKLGKTVE…MSKLEKQHSN (217 aa). Residues 267–302 are compositionally biased toward low complexity; the sequence is QSCAASSPVSPVSPVSPVTSPTSPSATSEPESVSAT. The interval 267 to 489 is disordered; it reads QSCAASSPVS…ASGGLVGLFL (223 aa). The residue at position 273 (serine 273) is a Phosphoserine. A compositionally biased stretch (acidic residues) spans 311–331; it reads GGEDSCESQESLKDEEADEAQ. A Phosphoserine modification is found at serine 357. A compositionally biased stretch (low complexity) spans 358 to 368; sequence QEEALSSSAQS. 9 positions are modified to phosphoserine: serine 380, serine 392, serine 420, serine 422, serine 424, serine 430, serine 435, serine 439, and serine 443.

As to quaternary structure, homodimer. Interacts with BIN1. Interacts with ARHGEF6 (via SH3 domain), ARHGEF7 (via SH3 domain), SH3GL1, SH3GL2 and SH3GL3. Identified in a complex with ARHGEF6 and GIT2.

Its subcellular location is the cytoplasm. It localises to the cell projection. It is found in the podosome membrane. The protein localises to the cell cortex. The protein resides in the phagocytic cup. In terms of biological role, promotes cell motility and migration, probably via its interaction with the cell membrane and with podosome proteins that mediate interaction with the cytoskeleton. Modulates membrane curvature and mediates membrane tubulation. Inhibits phagocytosis. Plays a role in podosome formation. The polypeptide is Bridging integrator 2 (Bin2) (Mus musculus (Mouse)).